The sequence spans 687 residues: T-box transcription factor TBX2b (687 aa).

Residues leucine 103 to aspartate 276 constitute a DNA-binding region (T-box). 2 disordered regions span residues aspartate 303 to serine 452 and asparagine 611 to lysine 687. Basic and acidic residues-rich tracts occupy residues glycine 338–aspartate 357, serine 375–serine 400, and asparagine 408–glutamate 430. Composition is skewed to polar residues over residues asparagine 431 to proline 451, asparagine 611 to cysteine 630, and glycine 644 to threonine 654. Residues threonine 654 to serine 681 adopt a coiled-coil conformation. The span at serine 675–lysine 687 shows a compositional bias: basic and acidic residues.

Binds DNA as a monomer. In terms of tissue distribution, expressed in the axial mesoderm, notably, in the notochordal precursor cells immediately before formation of the notochord and in the chordoneural hinge of the tail bud, after the notochord is formed. In addition, its expression is detected in the ventral forebrain, sensory neurons, fin buds and excretory system.

Its subcellular location is the nucleus. Functionally, transcription factor which acts as a transcriptional repressor. May also function as a transcriptional activator. Binds to the palindromic T site 5'-TTCACACCTAGGTGTGAA-3' DNA sequence, or a half-site, which are present in the regulatory region of several genes. Involved in the transcriptional regulation of genes required for mesoderm differentiation. Plays a role in the specification of late notochordal precursor cells and formation of the differentiated notochord. Required for cardiac atrioventricular canal formation. The chain is T-box transcription factor TBX2b (tbx2b) from Danio rerio (Zebrafish).